The primary structure comprises 157 residues: Small ribosomal subunit protein uS7 (157 aa).

The protein belongs to the universal ribosomal protein uS7 family. Part of the 30S ribosomal subunit. Contacts proteins S9 and S11.

Functionally, one of the primary rRNA binding proteins, it binds directly to 16S rRNA where it nucleates assembly of the head domain of the 30S subunit. Is located at the subunit interface close to the decoding center, probably blocks exit of the E-site tRNA. The protein is Small ribosomal subunit protein uS7 of Chloroflexus aurantiacus (strain ATCC 29366 / DSM 635 / J-10-fl).